A 247-amino-acid chain; its full sequence is Anamorsin homolog (247 aa).

The N-terminal SAM-like domain stretch occupies residues 4–128 (FKGLQKSLYI…ETGSSARLSF (125 aa)). Residues 129-160 (AKKNASALNVWKISGDDEELIDEEDLLDEEDK) form a linker region. Positions 171, 180, 183, and 185 each coordinate [2Fe-2S] cluster. The fe-S binding site A stretch occupies residues 171 to 185 (CSTTGKRKACKNCSC). 4 residues coordinate [4Fe-4S] cluster: cysteine 208, cysteine 211, cysteine 219, and cysteine 222. Short sequence motifs (cx2C motif) lie at residues 208 to 211 (CGNC) and 219 to 222 (CSTC). Residues 208-222 (CGNCYLGDAFRCSTC) are fe-S binding site B.

This sequence belongs to the anamorsin family. As to quaternary structure, monomer. [2Fe-2S] cluster serves as cofactor. The cofactor is [4Fe-4S] cluster.

The protein localises to the cytoplasm. It is found in the mitochondrion intermembrane space. In terms of biological role, component of the cytosolic iron-sulfur (Fe-S) protein assembly (CIA) machinery. Required for the maturation of extramitochondrial Fe-S proteins. Part of an electron transfer chain functioning in an early step of cytosolic Fe-S biogenesis, facilitating the de novo assembly of a [4Fe-4S] cluster on the cytosolic Fe-S scaffold complex. Electrons are transferred from NADPH via a FAD- and FMN-containing diflavin oxidoreductase. Together with the diflavin oxidoreductase, also required for the assembly of the diferric tyrosyl radical cofactor of ribonucleotide reductase (RNR), probably by providing electrons for reduction during radical cofactor maturation in the catalytic small subunit. This Drosophila persimilis (Fruit fly) protein is Anamorsin homolog.